A 305-amino-acid chain; its full sequence is UDP-3-O-acyl-N-acetylglucosamine deacetylase (305 aa).

Zn(2+)-binding residues include His-79, His-238, and Asp-242. His-265 (proton donor) is an active-site residue.

This sequence belongs to the LpxC family. The cofactor is Zn(2+).

The catalysed reaction is a UDP-3-O-[(3R)-3-hydroxyacyl]-N-acetyl-alpha-D-glucosamine + H2O = a UDP-3-O-[(3R)-3-hydroxyacyl]-alpha-D-glucosamine + acetate. Its pathway is glycolipid biosynthesis; lipid IV(A) biosynthesis; lipid IV(A) from (3R)-3-hydroxytetradecanoyl-[acyl-carrier-protein] and UDP-N-acetyl-alpha-D-glucosamine: step 2/6. Its function is as follows. Catalyzes the hydrolysis of UDP-3-O-myristoyl-N-acetylglucosamine to form UDP-3-O-myristoylglucosamine and acetate, the committed step in lipid A biosynthesis. This Salmonella agona (strain SL483) protein is UDP-3-O-acyl-N-acetylglucosamine deacetylase.